Reading from the N-terminus, the 239-residue chain is MNIALLGYGRMGQTIEEISKNRDHKIVFKLDDDIENHDLNDFEIDVAIDFSVPKAAFKNITTCFKHAIPVVSGTTGWLDDYAKAREICKKEDSAFIYASNFSLGVNVFFELNQKLAGMMQGLEDYSVDIEEIHHLQKLDSPSGTAITLAQQILEQNSKLKGWQLDEADEDEIPIHAKREENVPGTHTVTYESSIDKIEITHTAKSRQGFALGAVVAAEYLKDKTGIFTMKDVLSDLFKN.

NAD(+)-binding positions include Asp-32, 73 to 75 (GTT), and 98 to 101 (ASNF). The active-site Proton donor/acceptor is the His-133. His-134 lines the (S)-2,3,4,5-tetrahydrodipicolinate pocket. Lys-137 functions as the Proton donor in the catalytic mechanism. 143–144 (GT) is a (S)-2,3,4,5-tetrahydrodipicolinate binding site.

It belongs to the DapB family.

Its subcellular location is the cytoplasm. The catalysed reaction is (S)-2,3,4,5-tetrahydrodipicolinate + NAD(+) + H2O = (2S,4S)-4-hydroxy-2,3,4,5-tetrahydrodipicolinate + NADH + H(+). It carries out the reaction (S)-2,3,4,5-tetrahydrodipicolinate + NADP(+) + H2O = (2S,4S)-4-hydroxy-2,3,4,5-tetrahydrodipicolinate + NADPH + H(+). Its pathway is amino-acid biosynthesis; L-lysine biosynthesis via DAP pathway; (S)-tetrahydrodipicolinate from L-aspartate: step 4/4. Catalyzes the conversion of 4-hydroxy-tetrahydrodipicolinate (HTPA) to tetrahydrodipicolinate. The sequence is that of 4-hydroxy-tetrahydrodipicolinate reductase from Christiangramia forsetii (strain DSM 17595 / CGMCC 1.15422 / KT0803) (Gramella forsetii).